Here is a 214-residue protein sequence, read N- to C-terminus: Redox-sensing transcriptional repressor Rex (214 aa).

A DNA-binding region (H-T-H motif) is located at residues 17–56 (LYYRIFKRFYADQVEKASSKQIADAMGIDSATVRRDFSYF). 91-96 (GCGNIG) serves as a coordination point for NAD(+).

The protein belongs to the transcriptional regulatory Rex family. Homodimer.

It localises to the cytoplasm. Functionally, modulates transcription in response to changes in cellular NADH/NAD(+) redox state. This is Redox-sensing transcriptional repressor Rex from Streptococcus equi subsp. zooepidemicus (strain H70).